The chain runs to 158 residues: MGRFIFVSFGLLVVFLSLSGTGADFDCPSGWSAYDQYCYRVIKQLKTWEDAEWFCTKQAKGAHLVSVESAGEADFVAQLVAENIKQNKYYVWIGLRIQNKGQQCSTKWSDGSSVNYENLLKSYSKKCFGLKKETEFLQWYNTDCEEKNLFVCKFPPQR.

Positions 1–23 are cleaved as a signal peptide; the sequence is MGRFIFVSFGLLVVFLSLSGTGA. Cystine bridges form between C27-C38, C55-C152, and C127-C144. Residues 34–153 form the C-type lectin domain; the sequence is YDQYCYRVIK…CEEKNLFVCK (120 aa).

This sequence belongs to the snaclec family. In terms of assembly, heterodimer; disulfide-linked. Expressed by the venom gland.

The protein resides in the secreted. Its function is as follows. Interferes with one step of hemostasis (modulation of platelet aggregation, or coagulation cascade, for example). This chain is Snaclec crotocetin-1, found in Crotalus durissus terrificus (South American rattlesnake).